A 93-amino-acid polypeptide reads, in one-letter code: Small ribosomal subunit protein uS17 (93 aa).

It belongs to the universal ribosomal protein uS17 family. In terms of assembly, part of the 30S ribosomal subunit.

Its function is as follows. One of the primary rRNA binding proteins, it binds specifically to the 5'-end of 16S ribosomal RNA. The chain is Small ribosomal subunit protein uS17 from Rhodococcus jostii (strain RHA1).